A 630-amino-acid chain; its full sequence is 1-deoxy-D-xylulose-5-phosphate synthase (630 aa).

Thiamine diphosphate is bound by residues H74 and 115 to 117; that span reads GHA. D146 is a Mg(2+) binding site. Thiamine diphosphate is bound by residues 147–148, N175, F284, and E364; that span reads AA. N175 lines the Mg(2+) pocket.

This sequence belongs to the transketolase family. DXPS subfamily. As to quaternary structure, homodimer. Requires Mg(2+) as cofactor. The cofactor is thiamine diphosphate.

It catalyses the reaction D-glyceraldehyde 3-phosphate + pyruvate + H(+) = 1-deoxy-D-xylulose 5-phosphate + CO2. It participates in metabolic intermediate biosynthesis; 1-deoxy-D-xylulose 5-phosphate biosynthesis; 1-deoxy-D-xylulose 5-phosphate from D-glyceraldehyde 3-phosphate and pyruvate: step 1/1. Functionally, catalyzes the acyloin condensation reaction between C atoms 2 and 3 of pyruvate and glyceraldehyde 3-phosphate to yield 1-deoxy-D-xylulose-5-phosphate (DXP). The chain is 1-deoxy-D-xylulose-5-phosphate synthase from Methylacidiphilum infernorum (isolate V4) (Methylokorus infernorum (strain V4)).